The primary structure comprises 154 residues: Crossover junction endodeoxyribonuclease RuvC (154 aa).

Residues D7, E67, and D139 contribute to the active site. D7, E67, and D139 together coordinate Mg(2+).

It belongs to the RuvC family. In terms of assembly, homodimer which binds Holliday junction (HJ) DNA. The HJ becomes 2-fold symmetrical on binding to RuvC with unstacked arms; it has a different conformation from HJ DNA in complex with RuvA. In the full resolvosome a probable DNA-RuvA(4)-RuvB(12)-RuvC(2) complex forms which resolves the HJ. Requires Mg(2+) as cofactor.

It is found in the cytoplasm. The enzyme catalyses Endonucleolytic cleavage at a junction such as a reciprocal single-stranded crossover between two homologous DNA duplexes (Holliday junction).. Functionally, the RuvA-RuvB-RuvC complex processes Holliday junction (HJ) DNA during genetic recombination and DNA repair. Endonuclease that resolves HJ intermediates. Cleaves cruciform DNA by making single-stranded nicks across the HJ at symmetrical positions within the homologous arms, yielding a 5'-phosphate and a 3'-hydroxyl group; requires a central core of homology in the junction. The consensus cleavage sequence is 5'-(A/T)TT(C/G)-3'. Cleavage occurs on the 3'-side of the TT dinucleotide at the point of strand exchange. HJ branch migration catalyzed by RuvA-RuvB allows RuvC to scan DNA until it finds its consensus sequence, where it cleaves and resolves the cruciform DNA. The polypeptide is Crossover junction endodeoxyribonuclease RuvC (Prochlorococcus marinus (strain MIT 9303)).